We begin with the raw amino-acid sequence, 368 residues long: MEQFEFVNKTEIPTHAINNTAFAHLGVNLAYKTDDTSRYLAAALMTDGNHLVGSGFEILAASCDSLNTALYGYKAVAFINKETKTIHIASAGTKADINDIWDDALITFHYAPNKLKIAQKFVDNIISKIGGIDEAREYTFDTSGHSLGAIIADLTGIELHSRNLNFNKSVTFDSPGSQEVIKYAINQDLFTGKVITPIEELAKHSEVYNAKPNIINTTNQHVGQINLVLPKINNEKSKSSEAVGWFKYLYNISGSAVYKVAEYLNFNKMFEGINNHKLKYFADLQDSAVIPIANWEEQILENNAYTQKLKTIPSTGNDVYLLDTNRITDNEYTSIIGIDVFHWAYNDLQQSCAMETVEQIGNLIPILC.

This is an uncharacterized protein from Rickettsia prowazekii (strain Madrid E).